Reading from the N-terminus, the 651-residue chain is Chaperone protein HtpG (651 aa).

The tract at residues 1–353 (MAAHVEQLEF…AQDMSLNVSR (353 aa)) is a; substrate-binding. Residues 354 to 569 (EILQQDRQIR…TFGITPALAR (216 aa)) are b. The segment at 570-651 (MYRASGQPVP…RLTRTVGDQT (82 aa)) is c.

The protein belongs to the heat shock protein 90 family. As to quaternary structure, homodimer.

It is found in the cytoplasm. Its function is as follows. Molecular chaperone. Has ATPase activity. In Mycolicibacterium vanbaalenii (strain DSM 7251 / JCM 13017 / BCRC 16820 / KCTC 9966 / NRRL B-24157 / PYR-1) (Mycobacterium vanbaalenii), this protein is Chaperone protein HtpG.